The sequence spans 449 residues: Uric acid permease PucJ (449 aa).

The next 13 helical transmembrane spans lie at 11-31, 41-61, 67-87, 91-111, 119-139, 158-178, 191-211, 229-249, 277-297, 313-333, 334-354, 372-392, and 401-421; these read LSLQHVLAMYAGAILVPLLVG, LSYLLAIDLLTCGVATLLQTL, GIGLPVMLGSSFVAVTPMIAI, YGIHAIYGSIIAAGVFIFLFA, VLFPPVVTGTVVTLIGLSLVP, EYGSLENLLLSVGVLVLILVL, VLIGIAAGTAAAAIMGKVSFS, APAFEIGPILTMLIVGIVIIV, AEGIAILIGGLFNAFPYNTFA, IVVTAGCILVCLGLIPKIAAL, ASAVPAAVLGGATVVMFGMVI, LLTIACSIALGIGASTAPGIF, and ILVSDGTITGSLTAIFLNLFF.

Belongs to the nucleobase:cation symporter-2 (NCS2) (TC 2.A.40) family.

It is found in the cell membrane. Functionally, uptake of uric acid. The protein is Uric acid permease PucJ (pucJ) of Bacillus subtilis (strain 168).